We begin with the raw amino-acid sequence, 87 residues long: Neutrophil antibiotic peptide NP-3B (87 aa).

The first 19 residues, 1-19, serve as a signal peptide directing secretion; sequence MRTLILLTTLLLLALHTQA. Residues 20–58 constitute a propeptide that is removed on maturation; it reads ESPQGSTKEAPDEEQDISVFFGGDKGTALQDAAVKAGVT. Disulfide bonds link cysteine 59-cysteine 87, cysteine 61-cysteine 76, and cysteine 66-cysteine 86.

This sequence belongs to the alpha-defensin family.

Its subcellular location is the secreted. Its function is as follows. Active in vitro against S.aureus, fungi, Gram-positive and Gram-negative bacteria and to a lesser extent against an enveloped virus. This Rattus norvegicus (Rat) protein is Neutrophil antibiotic peptide NP-3B.